Consider the following 77-residue polypeptide: Phytosulfokines 5 (77 aa).

A signal peptide spans 1–24 (MVKFTTFLCIIALLLCSTLTHASA). Positions 25–68 (RLNPTSVYPEENSFKKLEQGEVICEGVGEEECFLIRRTLVAHTD) are excised as a propeptide. Y69 and Y71 each carry sulfotyrosine. Positions 74–77 (NHNP) are excised as a propeptide.

Belongs to the phytosulfokine family. Post-translationally, sulfation is important for activity and for the binding to a putative membrane receptor. In terms of processing, PSK-beta is an enzymatic derivative of PSK-alpha. As to expression, expressed in stems, roots, mature leaves and flowers. Most abundant in vascular bundles.

The protein localises to the secreted. Promotes plant cell differentiation, organogenesis and somatic embryogenesis as well as cell proliferation. May be involved in the low quiescent center cell proliferation. This chain is Phytosulfokines 5 (PSK5), found in Arabidopsis thaliana (Mouse-ear cress).